The following is a 151-amino-acid chain: Deoxyuridine 5'-triphosphate nucleotidohydrolase (151 aa).

Substrate is bound by residues 70-72 (RSG), Asn-83, 87-89 (LID), and Met-97.

It belongs to the dUTPase family. In terms of assembly, homotrimer. Requires Mg(2+) as cofactor.

The enzyme catalyses dUTP + H2O = dUMP + diphosphate + H(+). It participates in pyrimidine metabolism; dUMP biosynthesis; dUMP from dCTP (dUTP route): step 2/2. This enzyme is involved in nucleotide metabolism: it produces dUMP, the immediate precursor of thymidine nucleotides and it decreases the intracellular concentration of dUTP so that uracil cannot be incorporated into DNA. The sequence is that of Deoxyuridine 5'-triphosphate nucleotidohydrolase from Escherichia coli O7:K1 (strain IAI39 / ExPEC).